Consider the following 473-residue polypeptide: MICLVILTCIIMSNSFVNNNNMVQAKMTWTMKAAEEAEAVANINCSEHGRAFLDGIISEGSPKCECNTCYTGPDCSEKIQGCSADVASGDGLFLEEYWKQHKEASAVLVSPWHRMSYFFNPVSNFISFELEKTIKELHEVVGNAAAKDRYIVFGVGVTQLIHGLVISLSPNMTATPDAPESKVVAHAPFYPVFREQTKYFDKKGYVWAGNAANYVNVSNPEQYIEMVTSPNNPEGLLRHAVIKGCKSIYDMVYYWPHYTPIKYKADEDILLFTMSKFTGHSGSRFGWALIKDESVYNNLLNYMTKNTEGTPRETQLRSLKVLKEIVAMVKTQKGTMRDLNTFGFKKLRERWVNITALLDQSDRFSYQELPQSEYCNYFRRMRPPSPSYAWVNCEWEEDKDCYQTFQNGRINTQSGVGFEASSRYVRLSLIKTQDDFDQLMYYLKDMVKAKRKTPLIKQLFTDETETASRRPFI.

An N-terminal signal peptide occupies residues 1–15; it reads MICLVILTCIIMSNS. The propeptide occupies 16 to 25; sequence FVNNNNMVQA. An EGF-like; atypical domain is found at 38–84; sequence EAVANINCSEHGRAFLDGIISEGSPKCECNTCYTGPDCSEKIQGCSA. An N-linked (GlcNAc...) asparagine glycan is attached at asparagine 44. Intrachain disulfides connect cysteine 45-cysteine 64, cysteine 66-cysteine 75, and cysteine 69-cysteine 82. Position 117-125 (117-125) interacts with chloride; sequence YFFNPVSNF. Asparagine 171 and asparagine 216 each carry an N-linked (GlcNAc...) asparagine glycan. Lysine 276 carries the post-translational modification N6-(pyridoxal phosphate)lysine. Residue asparagine 353 is glycosylated (N-linked (GlcNAc...) asparagine). The cysteines at positions 393 and 401 are disulfide-linked.

This sequence belongs to the alliinase family. Homodimer. Pyridoxal 5'-phosphate is required as a cofactor. Post-translationally, glycosylated. As to expression, high expression in bulbs, lower expression in leaves, and no expression in roots.

The protein localises to the vacuole. The catalysed reaction is an S-alkyl-L-cysteine S-oxide = an S-alkyl sulfenate + 2-aminoprop-2-enoate. The enzyme catalyses alliin = allylsulfenate + 2-aminoprop-2-enoate. In terms of biological role, able to cleave the C-S bond of sulfoxide derivatives of Cys to produce allicin, thus giving rise to all sulfur compounds which are responsible for most of the properties of garlic, such as the specific smell and flavor as well as the health benefits like blood lipid or blood pressure lowering. This chain is Alliin lyase 2, found in Allium sativum (Garlic).